A 1158-amino-acid chain; its full sequence is Hephaestin (1158 aa).

The first 23 residues, methionine 1–glycine 23, serve as a signal peptide directing secretion. 6 Plastocyanin-like domains span residues alanine 24–cysteine 206, glutamine 218–cysteine 366, proline 370–cysteine 560, lysine 570–cysteine 718, alanine 731–cysteine 903, and histidine 911–glutamate 1067. Residues alanine 24–serine 1110 lie on the Extracellular side of the membrane. Na(+)-binding residues include glycine 70 and tyrosine 73. Histidine 126 and histidine 128 together coordinate Cu(2+). Histidine 126 serves as a coordination point for O2. Lysine 134, aspartate 152, and aspartate 153 together coordinate Ca(2+). N-linked (GlcNAc...) asparagine glycosylation is present at asparagine 164. The cysteines at positions 180 and 206 are disulfide-linked. The Cu(2+) site is built by histidine 186 and histidine 188. An O2-binding site is contributed by histidine 186. An N-linked (GlcNAc...) asparagine glycan is attached at asparagine 236. Serine 265 is a Na(+) binding site. Cysteine 285 and cysteine 366 are oxidised to a cystine. The Cu(2+) site is built by histidine 304, cysteine 347, and histidine 352. Na(+)-binding residues include phenylalanine 416, glycine 425, and tyrosine 428. Cysteine 534 and cysteine 560 are oxidised to a cystine. N-linked (GlcNAc...) asparagine glycosylation occurs at asparagine 588. Serine 617 serves as a coordination point for Na(+). The cysteines at positions 637 and 718 are disulfide-linked. The Cu(2+) site is built by histidine 656, cysteine 699, histidine 704, and methionine 709. 2 N-linked (GlcNAc...) asparagine glycosylation sites follow: asparagine 714 and asparagine 758. Phenylalanine 769 and glycine 778 together coordinate Na(+). Asparagine 829 and asparagine 873 each carry an N-linked (GlcNAc...) asparagine glycan. Cysteine 877 and cysteine 903 are oxidised to a cystine. Asparagine 931 carries N-linked (GlcNAc...) asparagine glycosylation. Histidine 1000, histidine 1003, histidine 1005, histidine 1045, cysteine 1046, histidine 1047, histidine 1051, and methionine 1056 together coordinate Cu(2+). Residues histidine 1003 and histidine 1005 each contribute to the O2 site. Histidine 1047 is an O2 binding site. The helical transmembrane segment at valine 1111 to tryptophan 1131 threads the bilayer. Over tyrosine 1132–glutamine 1158 the chain is Cytoplasmic. Residues serine 1145, serine 1150, and serine 1155 each carry the phosphoserine modification.

It belongs to the multicopper oxidase family. Part of a complex composed of SLC40A1/ferroportin, TF/transferrin and HEPH/hephaestin that transfers iron from cells to transferrin. Cu cation serves as cofactor. As to expression, expressed by intestinal absorptive cells (at protein level). Also detected in breast, colon, bone trabecular cells and fibroblasts.

It is found in the basolateral cell membrane. It catalyses the reaction 4 Fe(2+) + O2 + 4 H(+) = 4 Fe(3+) + 2 H2O. In terms of biological role, plasma membrane ferroxidase that mediates the extracellular conversion of ferrous/Fe(2+) iron into its ferric/Fe(3+) form. Couples ferroportin which specifically exports ferrous/Fe(2+) iron from cells to transferrin that only binds and shuttles extracellular ferric/Fe(3+) iron throughout the body. By helping iron transfer from cells to blood mainly contributes to dietary iron absorption by the intestinal epithelium and more generally regulates iron levels in the body. The polypeptide is Hephaestin (Homo sapiens (Human)).